The sequence spans 279 residues: Movement protein (279 aa).

Positions 256-266 (PPIAIGSPSAS) are enriched in low complexity. The tract at residues 256–279 (PPIAIGSPSASRNNSFRSQVVNGL) is disordered. The span at 267 to 279 (RNNSFRSQVVNGL) shows a compositional bias: polar residues.

The protein belongs to the cucumovirus movement protein family.

It localises to the host cell junction. The protein resides in the host plasmodesma. Transports viral genome to neighboring plant cells directly through plasmosdesmata, without any budding. The movement protein allows efficient cell to cell propagation, by bypassing the host cell wall barrier. Acts by forming a tubular structure at the host plasmodesmata, enlarging it enough to allow free passage of virion capsids. The polypeptide is Movement protein (Cucumis sativus (Cucumber)).